The chain runs to 208 residues: Small ribosomal subunit protein uS4 (208 aa).

Residues 98–161 (RRLDNVIYRL…RKIPVIAEAQ (64 aa)) enclose the S4 RNA-binding domain.

The protein belongs to the universal ribosomal protein uS4 family. Part of the 30S ribosomal subunit. Contacts protein S5. The interaction surface between S4 and S5 is involved in control of translational fidelity.

One of the primary rRNA binding proteins, it binds directly to 16S rRNA where it nucleates assembly of the body of the 30S subunit. Functionally, with S5 and S12 plays an important role in translational accuracy. This chain is Small ribosomal subunit protein uS4, found in Nitratidesulfovibrio vulgaris (strain DSM 19637 / Miyazaki F) (Desulfovibrio vulgaris).